Consider the following 127-residue polypeptide: Putative lipoprotein LprJ (127 aa).

An N-terminal signal peptide occupies residues methionine 1–serine 34. A lipid anchor (N-palmitoyl cysteine) is attached at cysteine 35. Residue cysteine 35 is the site of S-diacylglycerol cysteine attachment. Residues cysteine 35 to aspartate 99 lie on the Extracellular side of the membrane. A helical membrane pass occupies residues methionine 100 to leucine 120. Topologically, residues methionine 121–alanine 127 are cytoplasmic.

May interact with sensor protein KdpD. Post-translationally, modified by Lgt on Cys-35 with an S-linked diacylglycerol, signal peptide is removed by LspA, modified by Lnt with amide-linked fatty acid.

The protein localises to the cell membrane. In terms of biological role, overexpression induces expression of sensor protein kdpD gene at low K(+) concentrations (0 and 250 uM, tested in M.smegatis). The polypeptide is Putative lipoprotein LprJ (lprJ) (Mycobacterium tuberculosis (strain ATCC 25618 / H37Rv)).